An 855-amino-acid chain; its full sequence is MSNSSARPESLSEYLAHLPLSDEQRAELARCTSFSELHQHLAAQPAASTTEAAQASVGPRLTVGSAAELEEAEMLGVDASGRLCLKIAPPIKRTKVVPEPWRTNVLIRMWRRMTGRTNAPQPPKRELPPARWRTVGSIRRYILLTLMIGQTLVAGWYMKGILPYQGWSFVDFDEIVHQPLWDTVVQVWPYALQTSILVLFGILFCWVSAGFWTALMGFLELLTGRDKYKISGSSAGNEPIAPEARTALVMPICNEDVPRVFAGLRATFESVAASGNLDRFDFFVLSDTNDTDIAVAEQQAWLDVCREAKGFGRIFYRRRRRRVKRKSGNLDDFCRRWGGEYKYMVVLDADSVMSGECLSSLVRLMEANPDAGIIQTGPKASGMDTLYARLQQFATRVYGPLFTAGLHFWQLGESHYWGHNAIIRMKPFIEHCALAPLPGKGAFAGAILSHDFVEAALMRRAGWGVWIAYDLPGSYEELPPNLLDELKRDRRWCHGNLMNFRLFLVKGMHPVHRAVFLTGVMSYLSAPLWFLFLVLSTALLATNTLMEPQYFIEPFQLYPLWPQWHPEKAIALFSTTIVLLFLPKLLSVILIWAKGATEFGGRVKVTLSMLLEMLFSMLLAPVRMIFHTRFVLAAFLGWAATWNSPQRDDDSTPWSEAVRRHGPQTLLGIAWASLVAWLNPSFLWWLAPIVGSLVLSIPVSVISSRVRLGLAARDEKLFLIPEEYATPPELLATDQYTHENRWHALHDGFVRAVVDPRQNALACAMATARHGQAAPIEALRAERVAKALEVGPKGLDGNTRLALLSDPVALSRLHEQVWAEHNTAWIDVWRASIDNDPHSPLLPLHPENVAQPALA.

Transmembrane regions (helical) follow at residues 142–162 (ILLTLMIGQTLVAGWYMKGIL), 196–216 (ILVLFGILFCWVSAGFWTALM), 515–535 (VFLTGVMSYLSAPLWFLFLVL), 572–592 (LFSTTIVLLFLPKLLSVILIW), 606–626 (TLSMLLEMLFSMLLAPVRMIF), and 682–702 (FLWWLAPIVGSLVLSIPVSVI).

It belongs to the glycosyltransferase 2 family. OpgH subfamily.

It localises to the cell inner membrane. It functions in the pathway glycan metabolism; osmoregulated periplasmic glucan (OPG) biosynthesis. In terms of biological role, involved in the biosynthesis of osmoregulated periplasmic glucans (OPGs). The sequence is that of Glucans biosynthesis glucosyltransferase H from Pseudomonas entomophila (strain L48).